Reading from the N-terminus, the 384-residue chain is Dual specificity protein phosphatase 5 (384 aa).

The 123-residue stretch at 19 to 141 (AAARCVVLDC…FYSEYPECCV (123 aa)) folds into the Rhodanese domain. A Nuclear localization signal motif is present at residues 53–74 (RRARGGAVSARYVLPDEAARAR). The Tyrosine-protein phosphatase domain maps to 178–319 (GPVEILPFLY…LLQYESEILP (142 aa)). Cys-263 acts as the Phosphocysteine intermediate in catalysis.

Belongs to the protein-tyrosine phosphatase family. Non-receptor class dual specificity subfamily.

The protein localises to the nucleus. It carries out the reaction O-phospho-L-tyrosyl-[protein] + H2O = L-tyrosyl-[protein] + phosphate. The catalysed reaction is O-phospho-L-seryl-[protein] + H2O = L-seryl-[protein] + phosphate. The enzyme catalyses O-phospho-L-threonyl-[protein] + H2O = L-threonyl-[protein] + phosphate. Functionally, dual specificity protein phosphatase; active with phosphotyrosine, phosphoserine and phosphothreonine residues. The highest relative activity is toward ERK1. This is Dual specificity protein phosphatase 5 (DUSP5) from Homo sapiens (Human).